The sequence spans 347 residues: N-acetyl-gamma-glutamyl-phosphate reductase (347 aa).

Cys-152 is an active-site residue.

Belongs to the NAGSA dehydrogenase family. Type 1 subfamily.

It is found in the cytoplasm. It catalyses the reaction N-acetyl-L-glutamate 5-semialdehyde + phosphate + NADP(+) = N-acetyl-L-glutamyl 5-phosphate + NADPH + H(+). Its pathway is amino-acid biosynthesis; L-arginine biosynthesis; N(2)-acetyl-L-ornithine from L-glutamate: step 3/4. Catalyzes the NADPH-dependent reduction of N-acetyl-5-glutamyl phosphate to yield N-acetyl-L-glutamate 5-semialdehyde. This chain is N-acetyl-gamma-glutamyl-phosphate reductase, found in Neisseria meningitidis serogroup C (strain 053442).